A 255-amino-acid chain; its full sequence is Ciliogenesis and planar polarity effector 2 (255 aa).

Residues 52 to 255 (PADIASYKLF…VIAGLVGGAD (204 aa)) are small GTPase-like. GTP contacts are provided by residues 64–71 (GRSGAGKT) and 177–180 (TKLD).

It belongs to the small GTPase superfamily. Rab family.

It localises to the cytoplasm. Its subcellular location is the cytoskeleton. The protein localises to the cilium basal body. Its function is as follows. Potential effector of the planar cell polarity signaling pathway. Plays a role in targeted membrane trafficking most probably at the level of vesicle fusion with membranes. Involved in cilium biogenesis by regulating the transport of cargo proteins to the basal body and to the apical tips of cilia. More generally involved in exocytosis in secretory cells. The chain is Ciliogenesis and planar polarity effector 2 (cplane2) from Xenopus tropicalis (Western clawed frog).